A 244-amino-acid polypeptide reads, in one-letter code: 23S rRNA (guanosine-2'-O-)-methyltransferase RlmB (244 aa).

The S-adenosyl-L-methionine site is built by G196, I216, and L225.

Belongs to the class IV-like SAM-binding methyltransferase superfamily. RNA methyltransferase TrmH family. RlmB subfamily. In terms of assembly, homodimer.

The protein resides in the cytoplasm. It carries out the reaction guanosine(2251) in 23S rRNA + S-adenosyl-L-methionine = 2'-O-methylguanosine(2251) in 23S rRNA + S-adenosyl-L-homocysteine + H(+). Its function is as follows. Specifically methylates the ribose of guanosine 2251 in 23S rRNA. This is 23S rRNA (guanosine-2'-O-)-methyltransferase RlmB from Pectobacterium atrosepticum (strain SCRI 1043 / ATCC BAA-672) (Erwinia carotovora subsp. atroseptica).